We begin with the raw amino-acid sequence, 143 residues long: Large ribosomal subunit protein uL11 (143 aa).

This sequence belongs to the universal ribosomal protein uL11 family. As to quaternary structure, part of the ribosomal stalk of the 50S ribosomal subunit. Interacts with L10 and the large rRNA to form the base of the stalk. L10 forms an elongated spine to which L12 dimers bind in a sequential fashion forming a multimeric L10(L12)X complex. One or more lysine residues are methylated.

Forms part of the ribosomal stalk which helps the ribosome interact with GTP-bound translation factors. The protein is Large ribosomal subunit protein uL11 of Laribacter hongkongensis (strain HLHK9).